The chain runs to 63 residues: uncharacterized protein (63 aa).

The chain crosses the membrane as a helical span at residues 20-40; that stretch reads IVLLISFIFFFGRFIYSSVGA.

The protein localises to the membrane. This is an uncharacterized protein from Escherichia coli O157:H7.